The following is a 296-amino-acid chain: Probable endonuclease 4 (296 aa).

Zn(2+)-binding residues include His69, His109, Glu160, Asp194, His197, His231, Asp244, His246, and Glu276.

This sequence belongs to the AP endonuclease 2 family. Zn(2+) serves as cofactor.

It catalyses the reaction Endonucleolytic cleavage to 5'-phosphooligonucleotide end-products.. Functionally, endonuclease IV plays a role in DNA repair. It cleaves phosphodiester bonds at apurinic or apyrimidinic (AP) sites, generating a 3'-hydroxyl group and a 5'-terminal sugar phosphate. The protein is Probable endonuclease 4 of Sulfurovum sp. (strain NBC37-1).